Consider the following 122-residue polypeptide: Large ribosomal subunit protein uL14 (122 aa).

Belongs to the universal ribosomal protein uL14 family. As to quaternary structure, part of the 50S ribosomal subunit. Forms a cluster with proteins L3 and L19. In the 70S ribosome, L14 and L19 interact and together make contacts with the 16S rRNA in bridges B5 and B8.

In terms of biological role, binds to 23S rRNA. Forms part of two intersubunit bridges in the 70S ribosome. The polypeptide is Large ribosomal subunit protein uL14 (Jannaschia sp. (strain CCS1)).